Consider the following 72-residue polypeptide: Translation initiation factor IF-1 (72 aa).

An S1-like domain is found at 1-72 (MAKEDVIEFS…TKGRITFRYK (72 aa)).

Belongs to the IF-1 family. In terms of assembly, component of the 30S ribosomal translation pre-initiation complex which assembles on the 30S ribosome in the order IF-2 and IF-3, IF-1 and N-formylmethionyl-tRNA(fMet); mRNA recruitment can occur at any time during PIC assembly.

The protein localises to the cytoplasm. One of the essential components for the initiation of protein synthesis. Stabilizes the binding of IF-2 and IF-3 on the 30S subunit to which N-formylmethionyl-tRNA(fMet) subsequently binds. Helps modulate mRNA selection, yielding the 30S pre-initiation complex (PIC). Upon addition of the 50S ribosomal subunit IF-1, IF-2 and IF-3 are released leaving the mature 70S translation initiation complex. The protein is Translation initiation factor IF-1 of Paramagnetospirillum magneticum (strain ATCC 700264 / AMB-1) (Magnetospirillum magneticum).